The following is a 162-amino-acid chain: MRLCGLLIFLSYIVYVDNAVTANFISDPRSMFPKMVRTKNAFHFLQYFMGTFRRMFRNKTEMIEHFNYYDDQVKGTDCHIQEELDFARFKSYFDRYTRTHYNPEIRIIFAIMTKDSSHMTVEFHVTSQSWFGFEDHFHMIIRAVNDENVGWGVRYLSMAFNC.

Residues 1-21 (MRLCGLLIFLSYIVYVDNAVT) form the signal peptide.

This is an uncharacterized protein from Caenorhabditis elegans.